The chain runs to 64 residues: Large ribosomal subunit protein bL28 (64 aa).

Belongs to the bacterial ribosomal protein bL28 family.

The polypeptide is Large ribosomal subunit protein bL28 (Campylobacter lari (strain RM2100 / D67 / ATCC BAA-1060)).